We begin with the raw amino-acid sequence, 158 residues long: Ecotin-like protein 2 (158 aa).

It belongs to the protease inhibitor I11 (ecotin) family.

In Leishmania major, this protein is Ecotin-like protein 2.